We begin with the raw amino-acid sequence, 397 residues long: L-asparaginase-like protein CG4372 (397 aa).

An N-terminal signal peptide occupies residues 1-22; it reads MLAQSCCLRLLILLLLFTTIGS. Disulfide bonds link cysteine 90/cysteine 95, cysteine 189/cysteine 205, and cysteine 344/cysteine 371.

The protein belongs to the Ntn-hydrolase family.

The sequence is that of L-asparaginase-like protein CG4372 from Drosophila melanogaster (Fruit fly).